We begin with the raw amino-acid sequence, 828 residues long: USP6 N-terminal-like protein (828 aa).

N-acetylmethionine is present on Met-1. Residues 100-292 (GIPLQLRGEV…RIWDIYIFEG (193 aa)) form the Rab-GAP TBC domain. The segment covering 355–367 (DLPEPGKEDEYPK) has biased composition (basic and acidic residues). A disordered region spans residues 355-722 (DLPEPGKEDE…NSGSPKNGKL (368 aa)). Phosphoserine is present on residues Ser-391, Ser-396, and Ser-400. Positions 434-451 (KSVEEESKKLKDEADFQR) are enriched in basic and acidic residues. The span at 465 to 478 (NHAAANQNSNATSN) shows a compositional bias: low complexity. Basic and acidic residues-rich tracts occupy residues 498–508 (RTAKYTMEGKG) and 535–544 (KALDAEDGKR). Residues Ser-546 and Ser-549 each carry the phosphoserine modification. Tyr-582 is modified (phosphotyrosine). Ser-585 is modified (phosphoserine). A compositionally biased stretch (polar residues) spans 592–603 (PSSSPSKVSNKF). A phosphoserine mark is found at Ser-642, Ser-655, Ser-659, Ser-676, and Ser-680. 2 stretches are compositionally biased toward polar residues: residues 648 to 666 (TANSSFASPQFSPGTQLNP) and 673 to 683 (STLSVSASPEK). Low complexity predominate over residues 686-697 (SRPSPLVLPSSR). Ser-716 carries the phosphoserine modification. Phosphotyrosine is present on Tyr-729. A disordered region spans residues 789–817 (KASPAAEDASPSGYPYSGPPPPAYHYRNR).

Interacts with EPS8. In terms of tissue distribution, widely expressed.

The protein resides in the golgi apparatus. It is found in the cytoplasmic vesicle. Functionally, acts as a GTPase-activating protein for RAB5A and RAB43. Involved in receptor trafficking. In complex with EPS8 inhibits internalization of EGFR. Involved in retrograde transport from the endocytic pathway to the Golgi apparatus. Involved in the transport of Shiga toxin from early and recycling endosomes to the trans-Golgi network. Required for structural integrity of the Golgi complex. In Homo sapiens (Human), this protein is USP6 N-terminal-like protein (USP6NL).